The primary structure comprises 194 residues: MSTVTFVTGNANKLKEVIAILSGSQSEGGESKVGNFTIVNKSLDLDELQGSIEEVTIHKAKSAAEILGGPVLVEDTCLGFTAFNDLPGPYIKWFVKSVGLQGLVDMLYKFEDKSAKAICTFGYCEGPGKPVQLFQGITKGSIVESRGPTNFGWDSIFQPDGFDKTYAELDKEIKNSISHRFRALDKLRDFLVSQ.

ITP is bound at residue 8-13 (TGNANK). Residue Glu47 participates in Mg(2+) binding. ITP-binding positions include Lys59, 75-76 (DT), Lys92, 151-154 (FGWD), Lys174, and 179-180 (HR).

This sequence belongs to the HAM1 NTPase family. Homodimer. The cofactor is Mg(2+). It depends on Mn(2+) as a cofactor.

Its subcellular location is the cytoplasm. The protein localises to the nucleus. It catalyses the reaction ITP + H2O = IMP + diphosphate + H(+). It carries out the reaction dITP + H2O = dIMP + diphosphate + H(+). The enzyme catalyses XTP + H2O = XMP + diphosphate + H(+). Its function is as follows. Pyrophosphatase that hydrolyzes non-canonical purine nucleotides such as inosine triphosphate (ITP), deoxyinosine triphosphate (dITP) or xanthosine 5'-triphosphate (XTP) to their respective monophosphate derivatives. The enzyme does not distinguish between the deoxy- and ribose forms. Probably excludes non-canonical purines from RNA and DNA precursor pools, thus preventing their incorporation into RNA and DNA and avoiding chromosomal lesions. This chain is Inosine triphosphate pyrophosphatase, found in Scheffersomyces stipitis (strain ATCC 58785 / CBS 6054 / NBRC 10063 / NRRL Y-11545) (Yeast).